A 154-amino-acid polypeptide reads, in one-letter code: Protein X (154 aa).

Residues 68–117 (PCALRFTSARRMETTVNAHQVLPKVLHKRTLGLSAMSTTDLEAYFKDCLF) are mitochondrial targeting sequence.

The protein belongs to the orthohepadnavirus protein X family. As to quaternary structure, may form homodimer. May interact with host CEBPA, CFLAR, CREB1, DDB1, E4F1, HBXIP, HSPD1/HSP60, NFKBIA, POLR2E and SMAD4. Interacts with host SMC5-SMC6 complex and induces its degradation. Interacts with host TRPC4AP; leading to prevent ubiquitination of TRPC4AP. Interacts with host PLSCR1; this interaction promotes ubiquitination and degradation of HBx and impairs HBx-mediated cell proliferation. In terms of processing, a fraction may be phosphorylated in insect cells and HepG2 cells, a human hepatoblastoma cell line. Phosphorylated in vitro by host protein kinase C or mitogen-activated protein kinase. N-acetylated in insect cells.

It is found in the host cytoplasm. Its subcellular location is the host nucleus. The protein localises to the host mitochondrion. Its function is as follows. Multifunctional protein that plays a role in silencing host antiviral defenses and promoting viral transcription. Does not seem to be essential for HBV infection. May be directly involved in development of cirrhosis and liver cancer (hepatocellular carcinoma). Most of cytosolic activities involve modulation of cytosolic calcium. The effect on apoptosis is controversial depending on the cell types in which the studies have been conducted. May induce apoptosis by localizing in mitochondria and causing loss of mitochondrial membrane potential. May also modulate apoptosis by binding host CFLAR, a key regulator of the death-inducing signaling complex (DISC). Promotes viral transcription by using the host E3 ubiquitin ligase DDB1 to target the SMC5-SMC6 complex to proteasomal degradation. This host complex would otherwise bind to viral episomal DNA, and prevents its transcription. Moderately stimulates transcription of many different viral and cellular transcription elements. Promoters and enhancers stimulated by HBx contain DNA binding sites for NF-kappa-B, AP-1, AP-2, c-EBP, ATF/CREB, or the calcium-activated factor NF-AT. This chain is Protein X, found in Hepatitis B virus genotype C subtype adr (strain Japan/adr4/1983) (HBV-C).